The primary structure comprises 912 residues: Translation initiation factor IF-2 (912 aa).

Residues serine 26–arginine 297 form a disordered region. Positions lysine 56–lysine 74 are enriched in low complexity. Positions alanine 100–alanine 120 are enriched in pro residues. The segment covering alanine 121–proline 131 has biased composition (low complexity). Pro residues-rich tracts occupy residues alanine 132–proline 152, proline 173–proline 183, and asparagine 192–glycine 218. Residues proline 219 to glycine 283 show a composition bias toward gly residues. Residues lysine 287–lysine 296 show a composition bias toward basic residues. One can recognise a tr-type G domain in the interval threonine 408–leucine 579. Residues glycine 417 to threonine 424 are G1. Glycine 417–threonine 424 contributes to the GTP binding site. The G2 stretch occupies residues glycine 442 to histidine 446. The G3 stretch occupies residues aspartate 467–glycine 470. GTP is bound by residues aspartate 467–histidine 471 and asparagine 521–aspartate 524. A G4 region spans residues asparagine 521–aspartate 524. Residues serine 557 to arginine 559 form a G5 region.

Belongs to the TRAFAC class translation factor GTPase superfamily. Classic translation factor GTPase family. IF-2 subfamily.

The protein localises to the cytoplasm. In terms of biological role, one of the essential components for the initiation of protein synthesis. Protects formylmethionyl-tRNA from spontaneous hydrolysis and promotes its binding to the 30S ribosomal subunits. Also involved in the hydrolysis of GTP during the formation of the 70S ribosomal complex. The sequence is that of Translation initiation factor IF-2 from Mycobacteroides abscessus (strain ATCC 19977 / DSM 44196 / CCUG 20993 / CIP 104536 / JCM 13569 / NCTC 13031 / TMC 1543 / L948) (Mycobacterium abscessus).